A 151-amino-acid polypeptide reads, in one-letter code: SsrA-binding protein (151 aa).

It belongs to the SmpB family.

It localises to the cytoplasm. Functionally, required for rescue of stalled ribosomes mediated by trans-translation. Binds to transfer-messenger RNA (tmRNA), required for stable association of tmRNA with ribosomes. tmRNA and SmpB together mimic tRNA shape, replacing the anticodon stem-loop with SmpB. tmRNA is encoded by the ssrA gene; the 2 termini fold to resemble tRNA(Ala) and it encodes a 'tag peptide', a short internal open reading frame. During trans-translation Ala-aminoacylated tmRNA acts like a tRNA, entering the A-site of stalled ribosomes, displacing the stalled mRNA. The ribosome then switches to translate the ORF on the tmRNA; the nascent peptide is terminated with the 'tag peptide' encoded by the tmRNA and targeted for degradation. The ribosome is freed to recommence translation, which seems to be the essential function of trans-translation. The chain is SsrA-binding protein from Chlamydia muridarum (strain MoPn / Nigg).